The sequence spans 37 residues: Large ribosomal subunit protein bL36 (37 aa).

This sequence belongs to the bacterial ribosomal protein bL36 family.

In Idiomarina loihiensis (strain ATCC BAA-735 / DSM 15497 / L2-TR), this protein is Large ribosomal subunit protein bL36.